The following is a 254-amino-acid chain: Leucyl/phenylalanyl-tRNA--protein transferase (254 aa).

This sequence belongs to the L/F-transferase family.

It is found in the cytoplasm. The enzyme catalyses N-terminal L-lysyl-[protein] + L-leucyl-tRNA(Leu) = N-terminal L-leucyl-L-lysyl-[protein] + tRNA(Leu) + H(+). The catalysed reaction is N-terminal L-arginyl-[protein] + L-leucyl-tRNA(Leu) = N-terminal L-leucyl-L-arginyl-[protein] + tRNA(Leu) + H(+). It carries out the reaction L-phenylalanyl-tRNA(Phe) + an N-terminal L-alpha-aminoacyl-[protein] = an N-terminal L-phenylalanyl-L-alpha-aminoacyl-[protein] + tRNA(Phe). Functionally, functions in the N-end rule pathway of protein degradation where it conjugates Leu, Phe and, less efficiently, Met from aminoacyl-tRNAs to the N-termini of proteins containing an N-terminal arginine or lysine. This Burkholderia multivorans (strain ATCC 17616 / 249) protein is Leucyl/phenylalanyl-tRNA--protein transferase.